The following is a 217-amino-acid chain: Putative thymidylate synthase (217 aa).

Cys139 is a catalytic residue.

Belongs to the thymidylate synthase family. Archaeal-type ThyA subfamily. As to quaternary structure, monomer.

Its subcellular location is the cytoplasm. It functions in the pathway pyrimidine metabolism; dTTP biosynthesis. May catalyze the biosynthesis of dTMP using an unknown cosubstrate. This is Putative thymidylate synthase from Methanosarcina acetivorans (strain ATCC 35395 / DSM 2834 / JCM 12185 / C2A).